The sequence spans 351 residues: Dihydroorotate dehydrogenase (quinone) (351 aa).

FMN-binding positions include 61–65 (AGLDK) and Thr85. Lys65 is a binding site for substrate. 110–114 (NRMGF) is a substrate binding site. The FMN site is built by Asn139 and Asn172. Asn172 is a substrate binding site. The Nucleophile role is filled by Ser175. Substrate is bound at residue Asn177. Residues Lys217 and Thr245 each contribute to the FMN site. 246–247 (NT) contributes to the substrate binding site. Residues Gly268, Gly297, and 318 to 319 (YT) contribute to the FMN site.

This sequence belongs to the dihydroorotate dehydrogenase family. Type 2 subfamily. As to quaternary structure, monomer. The cofactor is FMN.

Its subcellular location is the cell membrane. The catalysed reaction is (S)-dihydroorotate + a quinone = orotate + a quinol. The protein operates within pyrimidine metabolism; UMP biosynthesis via de novo pathway; orotate from (S)-dihydroorotate (quinone route): step 1/1. Its function is as follows. Catalyzes the conversion of dihydroorotate to orotate with quinone as electron acceptor. This chain is Dihydroorotate dehydrogenase (quinone), found in Xylella fastidiosa (strain M23).